Here is a 148-residue protein sequence, read N- to C-terminus: Antigen GM6 (148 aa).

The disordered stretch occupies residues K1–E22. A run of 2 repeats spans residues K1–A68 and K69–A136. A 3; truncated repeat occupies K137–S148.

It localises to the cytoplasm. The protein resides in the cytoskeleton. This chain is Antigen GM6 (GM6), found in Trypanosoma brucei gambiense.